The primary structure comprises 429 residues: Proton extrusion protein PxcA (429 aa).

The disordered stretch occupies residues 139–161 (LNGPEAPQTNGDRPDNKPKVETV). Residues 150 to 161 (DRPDNKPKVETV) are compositionally biased toward basic and acidic residues. 4 consecutive transmembrane segments (helical) span residues 211–231 (FLLTLVIVPLLVHQLAKIAIT), 306–326 (AYENIFSDIFSFFAFVGILLI), 353–373 (LIILFTDIFVGYHSPHGWEII), and 389–409 (FNFLFIATFPVILDTVLKYWI).

This sequence belongs to the CemA family.

It localises to the cell inner membrane. Functionally, required for H(+) efflux immediately after light irradiation to form a rapid H(+) concentration gradient across the thylakoid membranes. Together with PxcL, contributes to transient H(+) uptake following dark to light transition. The sequence is that of Proton extrusion protein PxcA from Picosynechococcus sp. (strain ATCC 27264 / PCC 7002 / PR-6) (Agmenellum quadruplicatum).